Here is a 423-residue protein sequence, read N- to C-terminus: Glucose-1-phosphate adenylyltransferase (423 aa).

Residues Tyr98, Gly163, 178 to 179 (EK), and Ser189 contribute to the alpha-D-glucose 1-phosphate site.

This sequence belongs to the bacterial/plant glucose-1-phosphate adenylyltransferase family. Homotetramer.

The enzyme catalyses alpha-D-glucose 1-phosphate + ATP + H(+) = ADP-alpha-D-glucose + diphosphate. It participates in glycan biosynthesis; glycogen biosynthesis. Its function is as follows. Involved in the biosynthesis of ADP-glucose, a building block required for the elongation reactions to produce glycogen. Catalyzes the reaction between ATP and alpha-D-glucose 1-phosphate (G1P) to produce pyrophosphate and ADP-Glc. In Thermotoga neapolitana (strain ATCC 49049 / DSM 4359 / NBRC 107923 / NS-E), this protein is Glucose-1-phosphate adenylyltransferase.